The following is a 798-amino-acid chain: Penicillin-binding protein 1A (798 aa).

The Cytoplasmic portion of the chain corresponds to 1–9 (MIKKILTTC). Residues 10 to 30 (FGLVFGFCVFGVGLVAIAILV) traverse the membrane as a helical; Signal-anchor for type II membrane protein segment. Topologically, residues 31–798 (TYPKLPSLDS…SKQQQLDSLF (768 aa)) are periplasmic. The interval 50–218 (LTIYSADGEV…SAYNPIVNPE (169 aa)) is transglycosylase. E88 serves as the catalytic Proton donor; for transglycosylase activity. Residues 378–700 (RRALGFAARA…GTIAVPVWVD (323 aa)) are transpeptidase. S461 acts as the Acyl-ester intermediate; for transpeptidase activity in catalysis. Residues 738-798 (GLTLDNSGIA…SKQQQLDSLF (61 aa)) form a disordered region. Residues 768-777 (AADDEVRQDM) are compositionally biased toward basic and acidic residues. Over residues 783–798 (LPSNTGSKQQQLDSLF) the composition is skewed to polar residues.

The protein in the N-terminal section; belongs to the glycosyltransferase 51 family. In the C-terminal section; belongs to the transpeptidase family.

It is found in the cell inner membrane. It carries out the reaction [GlcNAc-(1-&gt;4)-Mur2Ac(oyl-L-Ala-gamma-D-Glu-L-Lys-D-Ala-D-Ala)](n)-di-trans,octa-cis-undecaprenyl diphosphate + beta-D-GlcNAc-(1-&gt;4)-Mur2Ac(oyl-L-Ala-gamma-D-Glu-L-Lys-D-Ala-D-Ala)-di-trans,octa-cis-undecaprenyl diphosphate = [GlcNAc-(1-&gt;4)-Mur2Ac(oyl-L-Ala-gamma-D-Glu-L-Lys-D-Ala-D-Ala)](n+1)-di-trans,octa-cis-undecaprenyl diphosphate + di-trans,octa-cis-undecaprenyl diphosphate + H(+). The enzyme catalyses Preferential cleavage: (Ac)2-L-Lys-D-Ala-|-D-Ala. Also transpeptidation of peptidyl-alanyl moieties that are N-acyl substituents of D-alanine.. Its pathway is cell wall biogenesis; peptidoglycan biosynthesis. In terms of biological role, cell wall formation. Synthesis of cross-linked peptidoglycan from the lipid intermediates. The enzyme has a penicillin-insensitive transglycosylase N-terminal domain (formation of linear glycan strands) and a penicillin-sensitive transpeptidase C-terminal domain (cross-linking of the peptide subunits). This Neisseria meningitidis serogroup A / serotype 4A (strain DSM 15465 / Z2491) protein is Penicillin-binding protein 1A (mrcA).